The primary structure comprises 504 residues: Maturase K (504 aa).

It belongs to the intron maturase 2 family. MatK subfamily.

The protein localises to the plastid. It is found in the chloroplast. Usually encoded in the trnK tRNA gene intron. Probably assists in splicing its own and other chloroplast group II introns. The sequence is that of Maturase K from Lepidium campestre (Field pepperwort).